We begin with the raw amino-acid sequence, 245 residues long: Fibroblast growth factor 3 (245 aa).

The first 17 residues, M1–P17, serve as a signal peptide directing secretion. A glycan (N-linked (GlcNAc...) asparagine) is linked at N65. Disordered regions lie at residues G137–R181 and Q195–A245. Residues G161–Q173 show a composition bias toward basic residues. Residues T226–H238 show a composition bias toward polar residues.

Belongs to the heparin-binding growth factors family. Interacts with FGFR1 and FGFR2. Affinity between fibroblast growth factors (FGFs) and their receptors is increased by heparan sulfate glycosaminoglycans that function as coreceptors. Glycosylated.

The protein localises to the nucleus. Its subcellular location is the endoplasmic reticulum. It is found in the golgi apparatus. Functionally, plays an important role in the regulation of embryonic development, cell proliferation, and cell differentiation. Required for normal ear development. The polypeptide is Fibroblast growth factor 3 (Fgf3) (Mus musculus (Mouse)).